Here is a 63-residue protein sequence, read N- to C-terminus: Large ribosomal subunit protein uL29 (63 aa).

This sequence belongs to the universal ribosomal protein uL29 family.

The chain is Large ribosomal subunit protein uL29 from Photorhabdus laumondii subsp. laumondii (strain DSM 15139 / CIP 105565 / TT01) (Photorhabdus luminescens subsp. laumondii).